A 214-amino-acid polypeptide reads, in one-letter code: Alkaline phosphatase-like protein (214 aa).

3 helical membrane-spanning segments follow: residues 48–68 (LGIIGMIIAATIGSVLGALIL), 141–161 (FLILTTLGTLIWNIVLVCLGA), and 177–197 (YSSVVVVILGIIFILAILIFV).

This sequence belongs to the DedA family.

The protein resides in the cell membrane. This Lactococcus lactis subsp. lactis (strain IL1403) (Streptococcus lactis) protein is Alkaline phosphatase-like protein (apl).